A 279-amino-acid polypeptide reads, in one-letter code: Thymidylate synthase (279 aa).

A dUMP-binding site is contributed by Arg21. His51 lines the (6R)-5,10-methylene-5,6,7,8-tetrahydrofolate pocket. 126–127 (RR) contacts dUMP. Cys159 acts as the Nucleophile in catalysis. DUMP-binding positions include 179–182 (RSAD), Asn190, and 220–222 (HLY). Asp182 provides a ligand contact to (6R)-5,10-methylene-5,6,7,8-tetrahydrofolate. Ala278 serves as a coordination point for (6R)-5,10-methylene-5,6,7,8-tetrahydrofolate.

This sequence belongs to the thymidylate synthase family. Bacterial-type ThyA subfamily. As to quaternary structure, homodimer.

The protein localises to the cytoplasm. It carries out the reaction dUMP + (6R)-5,10-methylene-5,6,7,8-tetrahydrofolate = 7,8-dihydrofolate + dTMP. Its pathway is pyrimidine metabolism; dTTP biosynthesis. In terms of biological role, catalyzes the reductive methylation of 2'-deoxyuridine-5'-monophosphate (dUMP) to 2'-deoxythymidine-5'-monophosphate (dTMP) while utilizing 5,10-methylenetetrahydrofolate (mTHF) as the methyl donor and reductant in the reaction, yielding dihydrofolate (DHF) as a by-product. This enzymatic reaction provides an intracellular de novo source of dTMP, an essential precursor for DNA biosynthesis. The protein is Thymidylate synthase of Marinobacter nauticus (strain ATCC 700491 / DSM 11845 / VT8) (Marinobacter aquaeolei).